The sequence spans 116 residues: Protein Wnt-5a (116 aa).

Ser-1 carries the O-palmitoleoyl serine; by PORCN lipid modification. N-linked (GlcNAc...) asparagine glycosylation is found at Asn-69 and Asn-83. Cys-82 and Cys-97 are disulfide-bonded.

This sequence belongs to the Wnt family. Palmitoleoylation is required for efficient binding to frizzled receptors. Depalmitoleoylation leads to Wnt signaling pathway inhibition.

Its subcellular location is the secreted. It is found in the extracellular space. The protein resides in the extracellular matrix. In terms of biological role, ligand for members of the frizzled family of seven transmembrane receptors. Can activate or inhibit canonical Wnt signaling, depending on receptor context. Required during embryogenesis for extension of the primary anterior-posterior axis. This Anser caerulescens (Snow goose) protein is Protein Wnt-5a (WNT5A).